The following is a 474-amino-acid chain: ATP synthase subunit beta (474 aa).

152 to 159 is a binding site for ATP; it reads GGAGVGKT.

The protein belongs to the ATPase alpha/beta chains family. In terms of assembly, F-type ATPases have 2 components, CF(1) - the catalytic core - and CF(0) - the membrane proton channel. CF(1) has five subunits: alpha(3), beta(3), gamma(1), delta(1), epsilon(1). CF(0) has three main subunits: a(1), b(2) and c(9-12). The alpha and beta chains form an alternating ring which encloses part of the gamma chain. CF(1) is attached to CF(0) by a central stalk formed by the gamma and epsilon chains, while a peripheral stalk is formed by the delta and b chains.

The protein resides in the cell inner membrane. The enzyme catalyses ATP + H2O + 4 H(+)(in) = ADP + phosphate + 5 H(+)(out). In terms of biological role, produces ATP from ADP in the presence of a proton gradient across the membrane. The catalytic sites are hosted primarily by the beta subunits. The chain is ATP synthase subunit beta from Paramagnetospirillum magneticum (strain ATCC 700264 / AMB-1) (Magnetospirillum magneticum).